The chain runs to 298 residues: Bifunctional protein FolD (298 aa).

NADP(+)-binding positions include 167 to 169 (GRS), serine 192, and isoleucine 233.

Belongs to the tetrahydrofolate dehydrogenase/cyclohydrolase family. As to quaternary structure, homodimer.

The enzyme catalyses (6R)-5,10-methylene-5,6,7,8-tetrahydrofolate + NADP(+) = (6R)-5,10-methenyltetrahydrofolate + NADPH. The catalysed reaction is (6R)-5,10-methenyltetrahydrofolate + H2O = (6R)-10-formyltetrahydrofolate + H(+). The protein operates within one-carbon metabolism; tetrahydrofolate interconversion. Catalyzes the oxidation of 5,10-methylenetetrahydrofolate to 5,10-methenyltetrahydrofolate and then the hydrolysis of 5,10-methenyltetrahydrofolate to 10-formyltetrahydrofolate. This is Bifunctional protein FolD from Caulobacter sp. (strain K31).